A 384-amino-acid polypeptide reads, in one-letter code: S-adenosylmethionine synthase (384 aa).

His15 provides a ligand contact to ATP. A Mg(2+)-binding site is contributed by Asp17. Glu43 lines the K(+) pocket. Glu56 and Gln99 together coordinate L-methionine. The segment at 99-109 (QSADINQGVDR) is flexible loop. Residues 164–166 (DAK), 230–231 (RF), Asp239, 245–246 (RK), Ala262, and Lys266 each bind ATP. Asp239 provides a ligand contact to L-methionine. Residue Lys270 participates in L-methionine binding.

The protein belongs to the AdoMet synthase family. In terms of assembly, homotetramer; dimer of dimers. It depends on Mg(2+) as a cofactor. K(+) is required as a cofactor.

Its subcellular location is the cytoplasm. The catalysed reaction is L-methionine + ATP + H2O = S-adenosyl-L-methionine + phosphate + diphosphate. Its pathway is amino-acid biosynthesis; S-adenosyl-L-methionine biosynthesis; S-adenosyl-L-methionine from L-methionine: step 1/1. Catalyzes the formation of S-adenosylmethionine (AdoMet) from methionine and ATP. The overall synthetic reaction is composed of two sequential steps, AdoMet formation and the subsequent tripolyphosphate hydrolysis which occurs prior to release of AdoMet from the enzyme. This chain is S-adenosylmethionine synthase, found in Haemophilus influenzae (strain PittGG).